Here is a 194-residue protein sequence, read N- to C-terminus: UPF0301 protein BQ03640 (194 aa).

Belongs to the UPF0301 (AlgH) family.

The chain is UPF0301 protein BQ03640 from Bartonella quintana (strain Toulouse) (Rochalimaea quintana).